A 578-amino-acid polypeptide reads, in one-letter code: MSANQQSNSQEVLGEVLGPLSDNERLKRESNLLRGTIEQDLQDRITGGFTADNFQLIRFHGMYQQDDRDIRNERAKQKLEPLHNVMLRARMPGGIITPKQWLAIDKFATEHSLYGSIRLTTRQTFQFHGVLKPNIKLMHQTLNSIGIDSIATAGDVNRNVLCTTNPVESELHQEAYEWAKKISEHLLPKTRAYAEIWLDGEKVESTEEDEPILGKNYLPRKFKTTVVIPPQNDVDVHANDLNFVAIADNGKLVGFNVLVGGGLAMTHCDTSTYPRRADDFGFIPLEKTLDVAAAVVTTQRDWGNRSNRKNAKTKYTLDRVGSDVFKAEVEKRAGVKFEQSRPYEFTERGDRIGWVEGIDGKHHLALFIENGRLLDFPGKPLKTGVAEIAKIHKGDFRMTANQNLIVAGVPKSQKAKIEKIAREHGLMDDGVSEQRKNSMACVAFPTCPLAMAEAERFLPQFVTDVEGILEKHGIPEEDNIILRVTGCPNGCGRAMLAEIGLVGKAPGRYNLHLGGNRGGTRVPKMCKENITDKQILEEIDQLVARWAAEREEGEAFGDFTIRAGIIQEVFVSKRDFHA.

Residues 1-11 (MSANQQSNSQE) show a composition bias toward polar residues. Residues 1–20 (MSANQQSNSQEVLGEVLGPL) form a disordered region. Cysteine 441, cysteine 447, cysteine 487, and cysteine 491 together coordinate [4Fe-4S] cluster. Residue cysteine 491 coordinates siroheme.

It belongs to the nitrite and sulfite reductase 4Fe-4S domain family. As to quaternary structure, alpha(8)-beta(8). The alpha component is a flavoprotein, the beta component is a hemoprotein. Siroheme serves as cofactor. It depends on [4Fe-4S] cluster as a cofactor.

The catalysed reaction is hydrogen sulfide + 3 NADP(+) + 3 H2O = sulfite + 3 NADPH + 4 H(+). It functions in the pathway sulfur metabolism; hydrogen sulfide biosynthesis; hydrogen sulfide from sulfite (NADPH route): step 1/1. Its function is as follows. Component of the sulfite reductase complex that catalyzes the 6-electron reduction of sulfite to sulfide. This is one of several activities required for the biosynthesis of L-cysteine from sulfate. This chain is Sulfite reductase [NADPH] hemoprotein beta-component, found in Vibrio campbellii (strain ATCC BAA-1116).